Consider the following 316-residue polypeptide: Small ribosomal subunit protein RACK1 (316 aa).

WD repeat units lie at residues G13–N44, G61–E91, G103–N133, G146–E178, G190–D220, N231–D260, and S281–G311.

The protein belongs to the WD repeat G protein beta family. Ribosomal protein RACK1 subfamily. Component of the small ribosomal subunit (SSU). Mature N.crassa ribosomes consist of a small (40S) and a large (60S) subunit. The 40S small subunit contains 1 molecule of ribosomal RNA (18S rRNA) and at least 32 different proteins. The large 60S subunit contains 3 rRNA molecules (26S, 5.8S and 5S rRNA) and at least 42 different proteins.

Its subcellular location is the cytoplasm. Component of the ribosome, a large ribonucleoprotein complex responsible for the synthesis of proteins in the cell. The small ribosomal subunit (SSU) binds messenger RNAs (mRNAs) and translates the encoded message by selecting cognate aminoacyl-transfer RNA (tRNA) molecules. The large subunit (LSU) contains the ribosomal catalytic site termed the peptidyl transferase center (PTC), which catalyzes the formation of peptide bonds, thereby polymerizing the amino acids delivered by tRNAs into a polypeptide chain. The nascent polypeptides leave the ribosome through a tunnel in the LSU and interact with protein factors that function in enzymatic processing, targeting, and the membrane insertion of nascent chains at the exit of the ribosomal tunnel. Required to activate general amino acid control under conditions of amino acid limitation in the vegetative growth phase, and for formation of protoperithecia in preparation for the sexual phase of the life cycle of N.crassa. The chain is Small ribosomal subunit protein RACK1 (cpc-2) from Neurospora crassa (strain ATCC 24698 / 74-OR23-1A / CBS 708.71 / DSM 1257 / FGSC 987).